Reading from the N-terminus, the 236-residue chain is uncharacterized protein (236 aa).

Belongs to the HyuE racemase family.

The protein resides in the cytoplasm. This is an uncharacterized protein from Schizosaccharomyces pombe (strain 972 / ATCC 24843) (Fission yeast).